The primary structure comprises 127 residues: Probable 4-amino-4-deoxy-L-arabinose-phosphoundecaprenol flippase subunit ArnF (127 aa).

The helical transmembrane segment at 1–21 (MMGYFWALMSVLLVSGAQLMM) threads the bilayer. At 22–48 (KWAMVSLPPVGQTDALMSAFMSVTPGA) the chain is on the periplasmic side. Residues 49–69 (VALVIGLFAYVFSMGCWYMAL) traverse the membrane as a helical segment. The Cytoplasmic portion of the chain corresponds to 70–77 (RRIALSKA). A helical transmembrane segment spans residues 78–98 (YPLLSLSYVLVWAAAIGLPWL). Residues 99–101 (HEP) lie on the Periplasmic side of the membrane. A helical transmembrane segment spans residues 102–122 (FSVGKLAGVSVIFVGLLLVCL). Over 123 to 127 (PDKKS) the chain is Cytoplasmic.

This sequence belongs to the ArnF family. In terms of assembly, heterodimer of ArnE and ArnF.

Its subcellular location is the cell inner membrane. Its pathway is bacterial outer membrane biogenesis; lipopolysaccharide biosynthesis. Its function is as follows. Translocates 4-amino-4-deoxy-L-arabinose-phosphoundecaprenol (alpha-L-Ara4N-phosphoundecaprenol) from the cytoplasmic to the periplasmic side of the inner membrane. In Enterobacter sp. (strain 638), this protein is Probable 4-amino-4-deoxy-L-arabinose-phosphoundecaprenol flippase subunit ArnF.